We begin with the raw amino-acid sequence, 415 residues long: Histidine--tRNA ligase (415 aa).

This sequence belongs to the class-II aminoacyl-tRNA synthetase family. In terms of assembly, homodimer.

The protein resides in the cytoplasm. The enzyme catalyses tRNA(His) + L-histidine + ATP = L-histidyl-tRNA(His) + AMP + diphosphate + H(+). In Rickettsia felis (strain ATCC VR-1525 / URRWXCal2) (Rickettsia azadi), this protein is Histidine--tRNA ligase.